Reading from the N-terminus, the 118-residue chain is NADPH-dependent 7-cyano-7-deazaguanine reductase (118 aa).

The Thioimide intermediate role is filled by cysteine 31. Aspartate 38 (proton donor) is an active-site residue. Substrate-binding positions include 53 to 55 and 72 to 73; these read IEL and YE.

This sequence belongs to the GTP cyclohydrolase I family. QueF type 1 subfamily.

The protein resides in the cytoplasm. The catalysed reaction is 7-aminomethyl-7-carbaguanine + 2 NADP(+) = 7-cyano-7-deazaguanine + 2 NADPH + 3 H(+). It functions in the pathway tRNA modification; tRNA-queuosine biosynthesis. Catalyzes the NADPH-dependent reduction of 7-cyano-7-deazaguanine (preQ0) to 7-aminomethyl-7-deazaguanine (preQ1). In Prosthecochloris aestuarii (strain DSM 271 / SK 413), this protein is NADPH-dependent 7-cyano-7-deazaguanine reductase.